A 174-amino-acid polypeptide reads, in one-letter code: Protein VdlD (174 aa).

Residues 20–132 (DRTKLLMSYL…YFTMVAVENG (113 aa)) form the HotDog ACOT-type domain.

It belongs to the acyl coenzyme A hydrolase family.

The polypeptide is Protein VdlD (vdlD) (Helicobacter pylori (strain J99 / ATCC 700824) (Campylobacter pylori J99)).